Reading from the N-terminus, the 489-residue chain is Ketol-acid reductoisomerase (NADP(+)) (489 aa).

The KARI N-terminal Rossmann domain maps to 17–208 (LGVCEFMEQS…GGHKAGVLRS (192 aa)). NADP(+) contacts are provided by residues 45 to 48 (CGAQ), Arg68, Arg76, Ser78, and 108 to 110 (DKQ). Residue His132 is part of the active site. Gly158 is a binding site for NADP(+). 2 KARI C-terminal knotted domains span residues 209 to 344 (SFVA…KTAP) and 345 to 485 (QEAP…MTAM). Mg(2+) contacts are provided by Asp217, Glu221, Glu389, and Glu393. Ser414 contacts substrate.

The protein belongs to the ketol-acid reductoisomerase family. The cofactor is Mg(2+).

The catalysed reaction is (2R)-2,3-dihydroxy-3-methylbutanoate + NADP(+) = (2S)-2-acetolactate + NADPH + H(+). It carries out the reaction (2R,3R)-2,3-dihydroxy-3-methylpentanoate + NADP(+) = (S)-2-ethyl-2-hydroxy-3-oxobutanoate + NADPH + H(+). It functions in the pathway amino-acid biosynthesis; L-isoleucine biosynthesis; L-isoleucine from 2-oxobutanoate: step 2/4. It participates in amino-acid biosynthesis; L-valine biosynthesis; L-valine from pyruvate: step 2/4. Functionally, involved in the biosynthesis of branched-chain amino acids (BCAA). Catalyzes an alkyl-migration followed by a ketol-acid reduction of (S)-2-acetolactate (S2AL) to yield (R)-2,3-dihydroxy-isovalerate. In the isomerase reaction, S2AL is rearranged via a Mg-dependent methyl migration to produce 3-hydroxy-3-methyl-2-ketobutyrate (HMKB). In the reductase reaction, this 2-ketoacid undergoes a metal-dependent reduction by NADPH to yield (R)-2,3-dihydroxy-isovalerate. In Flavobacterium johnsoniae (strain ATCC 17061 / DSM 2064 / JCM 8514 / BCRC 14874 / CCUG 350202 / NBRC 14942 / NCIMB 11054 / UW101) (Cytophaga johnsonae), this protein is Ketol-acid reductoisomerase (NADP(+)).